Here is a 2208-residue protein sequence, read N- to C-terminus: Glutamate synthase 1 [NADH], chloroplastic (2208 aa).

The N-terminal 49 residues, 1 to 49 (MSAASSSSVLHLRTNQQLLSLRSLKNSTSVASQLAVTSGVSRRRSCTAR), are a transit peptide targeting the chloroplast. Cysteine 117 acts as the Nucleophile in catalysis. The Glutamine amidotransferase type-2 domain maps to 117-521 (CGVGFVAELS…PGMMLLVDFE (405 aa)). The tract at residues 1040 to 1067 (GKSNTGEGGELPSRMEPLADGSRNPKRS) is disordered. Position 1211 to 1268 (1211 to 1268 (LAETHQTLVANDLRGRTVLQTDGQLKTGRDVAVAALLGAEEFGFSTAPLITLGCIMMR)) interacts with FMN. [3Fe-4S] cluster contacts are provided by cysteine 1264, cysteine 1270, and cysteine 1275. Position 1995 to 2009 (1995 to 2009 (GGGDTGTDCIGTSIR)) interacts with NAD(+).

It belongs to the glutamate synthase family. As to quaternary structure, monomer. The cofactor is [3Fe-4S] cluster. FAD is required as a cofactor. Requires FMN as cofactor. In terms of tissue distribution, highly expressed in roots and at low levels in leaves.

It localises to the plastid. It is found in the chloroplast. The catalysed reaction is 2 L-glutamate + NAD(+) = L-glutamine + 2-oxoglutarate + NADH + H(+). The protein operates within amino-acid biosynthesis; L-glutamate biosynthesis via GLT pathway; L-glutamate from 2-oxoglutarate and L-glutamine (NAD(+) route): step 1/1. It participates in energy metabolism; nitrogen metabolism. Functionally, involved in glutamate biosynthesis. Required for non-photorespiratory ammonium assimilation. Probably involved in primary ammonium assimilation in roots. The protein is Glutamate synthase 1 [NADH], chloroplastic (GLT1) of Arabidopsis thaliana (Mouse-ear cress).